The following is a 320-amino-acid chain: Malate dehydrogenase (320 aa).

Residues 10–15 (GAGMIG) and D34 contribute to the NAD(+) site. Positions 83 and 89 each coordinate substrate. NAD(+) is bound by residues N96 and 119–121 (ITN). Positions 121 and 152 each coordinate substrate. Catalysis depends on H176, which acts as the Proton acceptor.

It belongs to the LDH/MDH superfamily. MDH type 3 family.

The enzyme catalyses (S)-malate + NAD(+) = oxaloacetate + NADH + H(+). Catalyzes the reversible oxidation of malate to oxaloacetate. This is Malate dehydrogenase from Caulobacter vibrioides (strain NA1000 / CB15N) (Caulobacter crescentus).